The following is a 283-amino-acid chain: NAD kinase (283 aa).

The Proton acceptor role is filled by Asp-67. NAD(+)-binding positions include 67 to 68 (DG), 141 to 142 (ND), Arg-152, Asp-171, 182 to 187 (TAYSLS), and Gln-241.

This sequence belongs to the NAD kinase family. A divalent metal cation is required as a cofactor.

The protein resides in the cytoplasm. The catalysed reaction is NAD(+) + ATP = ADP + NADP(+) + H(+). Functionally, involved in the regulation of the intracellular balance of NAD and NADP, and is a key enzyme in the biosynthesis of NADP. Catalyzes specifically the phosphorylation on 2'-hydroxyl of the adenosine moiety of NAD to yield NADP. The protein is NAD kinase of Heliobacterium modesticaldum (strain ATCC 51547 / Ice1).